Reading from the N-terminus, the 172-residue chain is ATP synthase subunit b (172 aa).

The chain crosses the membrane as a helical span at residues 13–33; the sequence is GINGGDILFQLVMFLILLALL.

The protein belongs to the ATPase B chain family. As to quaternary structure, F-type ATPases have 2 components, F(1) - the catalytic core - and F(0) - the membrane proton channel. F(1) has five subunits: alpha(3), beta(3), gamma(1), delta(1), epsilon(1). F(0) has three main subunits: a(1), b(2) and c(10-14). The alpha and beta chains form an alternating ring which encloses part of the gamma chain. F(1) is attached to F(0) by a central stalk formed by the gamma and epsilon chains, while a peripheral stalk is formed by the delta and b chains.

It localises to the cell membrane. Its function is as follows. F(1)F(0) ATP synthase produces ATP from ADP in the presence of a proton or sodium gradient. F-type ATPases consist of two structural domains, F(1) containing the extramembraneous catalytic core and F(0) containing the membrane proton channel, linked together by a central stalk and a peripheral stalk. During catalysis, ATP synthesis in the catalytic domain of F(1) is coupled via a rotary mechanism of the central stalk subunits to proton translocation. In terms of biological role, component of the F(0) channel, it forms part of the peripheral stalk, linking F(1) to F(0). In Priestia megaterium (strain ATCC 12872 / QMB1551) (Bacillus megaterium), this protein is ATP synthase subunit b.